The following is a 274-amino-acid chain: Large ribosomal subunit protein uL2 (274 aa).

Disordered stretches follow at residues 28–54 and 221–274; these read KPYA…TRHI and RGTA…RTKK. Over residues 39 to 49 the composition is skewed to polar residues; the sequence is KTGGRNNNGRI.

It belongs to the universal ribosomal protein uL2 family. Part of the 50S ribosomal subunit. Forms a bridge to the 30S subunit in the 70S ribosome.

Functionally, one of the primary rRNA binding proteins. Required for association of the 30S and 50S subunits to form the 70S ribosome, for tRNA binding and peptide bond formation. It has been suggested to have peptidyltransferase activity; this is somewhat controversial. Makes several contacts with the 16S rRNA in the 70S ribosome. This is Large ribosomal subunit protein uL2 from Photorhabdus laumondii subsp. laumondii (strain DSM 15139 / CIP 105565 / TT01) (Photorhabdus luminescens subsp. laumondii).